Reading from the N-terminus, the 142-residue chain is Endoribonuclease YbeY (142 aa).

3 residues coordinate Zn(2+): His107, His111, and Asp117.

The protein belongs to the endoribonuclease YbeY family. It depends on Zn(2+) as a cofactor.

It localises to the cytoplasm. Its function is as follows. Single strand-specific metallo-endoribonuclease involved in late-stage 70S ribosome quality control and in maturation of the 3' terminus of the 16S rRNA. In Parabacteroides distasonis (strain ATCC 8503 / DSM 20701 / CIP 104284 / JCM 5825 / NCTC 11152), this protein is Endoribonuclease YbeY.